We begin with the raw amino-acid sequence, 635 residues long: Very-long-chain aldehyde decarbonylase GL1-6 (635 aa).

4 helical membrane passes run L46–I66, I100–A120, G127–H147, and V183–S203. A Fatty acid hydroxylase domain is found at V139–T273.

This sequence belongs to the sterol desaturase family. As to quaternary structure, homodimer.

The protein localises to the endoplasmic reticulum membrane. The enzyme catalyses a long-chain fatty aldehyde + 2 NADPH + O2 + H(+) = a long-chain alkane + formate + 2 NADP(+) + H2O. Aldehyde decarbonylase involved in the conversion of aldehydes to alkanes. Core component of a very-long-chain alkane synthesis complex. This Oryza sativa subsp. indica (Rice) protein is Very-long-chain aldehyde decarbonylase GL1-6.